The sequence spans 350 residues: Glycerol-1-phosphate dehydrogenase [NAD(P)+] (350 aa).

Residues 97 to 101 and 119 to 122 each bind NAD(+); these read GSKID and TTPS. Asp-124 serves as a coordination point for substrate. Ser-128 is an NAD(+) binding site. Asp-171 contributes to the substrate binding site. Zn(2+) contacts are provided by Asp-171 and His-251. Position 255 (His-255) interacts with substrate. A Zn(2+)-binding site is contributed by His-267.

Belongs to the glycerol-1-phosphate dehydrogenase family. Requires Zn(2+) as cofactor.

The protein localises to the cytoplasm. The catalysed reaction is sn-glycerol 1-phosphate + NAD(+) = dihydroxyacetone phosphate + NADH + H(+). It carries out the reaction sn-glycerol 1-phosphate + NADP(+) = dihydroxyacetone phosphate + NADPH + H(+). Its pathway is membrane lipid metabolism; glycerophospholipid metabolism. Its function is as follows. Catalyzes the NAD(P)H-dependent reduction of dihydroxyacetonephosphate (DHAP or glycerone phosphate) to glycerol 1-phosphate (G1P). The G1P thus generated is used as the glycerophosphate backbone of phospholipids in the cellular membranes of Archaea. This Picrophilus torridus (strain ATCC 700027 / DSM 9790 / JCM 10055 / NBRC 100828 / KAW 2/3) protein is Glycerol-1-phosphate dehydrogenase [NAD(P)+].